Here is a 363-residue protein sequence, read N- to C-terminus: 3-isopropylmalate dehydrogenase (363 aa).

77–90 lines the NAD(+) pocket; sequence GPKWQHLPPDQQPE. 4 residues coordinate substrate: Arg-98, Arg-108, Arg-137, and Asp-226. Residues Asp-226, Asp-250, and Asp-254 each contribute to the Mg(2+) site. 284 to 296 serves as a coordination point for NAD(+); that stretch reads GSAPDIAGKNIAN.

It belongs to the isocitrate and isopropylmalate dehydrogenases family. LeuB type 1 subfamily. Homodimer. Requires Mg(2+) as cofactor. Mn(2+) is required as a cofactor.

The protein localises to the cytoplasm. It catalyses the reaction (2R,3S)-3-isopropylmalate + NAD(+) = 4-methyl-2-oxopentanoate + CO2 + NADH. It participates in amino-acid biosynthesis; L-leucine biosynthesis; L-leucine from 3-methyl-2-oxobutanoate: step 3/4. Catalyzes the oxidation of 3-carboxy-2-hydroxy-4-methylpentanoate (3-isopropylmalate) to 3-carboxy-4-methyl-2-oxopentanoate. The product decarboxylates to 4-methyl-2 oxopentanoate. In Buchnera aphidicola subsp. Pemphigus spyrothecae, this protein is 3-isopropylmalate dehydrogenase.